The following is a 504-amino-acid chain: WD repeat-containing protein 55 homolog (504 aa).

2 disordered regions span residues 1 to 21 (MDRH…DIDD) and 33 to 132 (QEVL…DDDD). 2 stretches are compositionally biased toward acidic residues: residues 12–21 (NEDELDDIDD) and 33–48 (QEVL…EYDL). Over residues 63–74 (SSSNESISSDGS) the composition is skewed to low complexity. Residues 78–89 (NAEDSDSDDSMI) show a composition bias toward acidic residues. WD repeat units lie at residues 156–195 (KLED…NKLL), 200–239 (VHAK…LKKL), 243–281 (AHDD…AIFE), 284–323 (EVED…LYVQ), 326–365 (PYEE…YHCD), and 410–449 (QHNM…DFGD). The segment at 477-504 (FFADMTKDQDDDDNDGGNDTAAGPSNVT) is disordered.

This sequence belongs to the WD repeat WDR55 family.

This chain is WD repeat-containing protein 55 homolog, found in Drosophila virilis (Fruit fly).